The following is a 52-amino-acid chain: NADH dehydrogenase [ubiquinone] 1 alpha subcomplex subunit 4 homolog (52 aa).

Residues 14-30 (LYPLGAAVATAVGFATY) form a helical membrane-spanning segment.

It belongs to the complex I NDUFA4 subunit family.

The protein resides in the mitochondrion inner membrane. Its function is as follows. Accessory subunit of the mitochondrial membrane respiratory chain NADH dehydrogenase (Complex I), that is believed to be not involved in catalysis. Complex I functions in the transfer of electrons from NADH to the respiratory chain. The immediate electron acceptor for the enzyme is believed to be ubiquinone. The sequence is that of NADH dehydrogenase [ubiquinone] 1 alpha subcomplex subunit 4 homolog from Schizosaccharomyces pombe (strain 972 / ATCC 24843) (Fission yeast).